A 288-amino-acid polypeptide reads, in one-letter code: Diaminopimelate epimerase (288 aa).

Asparagine 17, glutamine 47, and asparagine 67 together coordinate substrate. Cysteine 76 functions as the Proton donor in the catalytic mechanism. Substrate-binding positions include glycine 77–asparagine 78, asparagine 164, asparagine 197, and glutamate 215–arginine 216. The active-site Proton acceptor is cysteine 224. Residue glycine 225 to serine 226 coordinates substrate.

This sequence belongs to the diaminopimelate epimerase family. As to quaternary structure, homodimer.

The protein localises to the cytoplasm. It carries out the reaction (2S,6S)-2,6-diaminopimelate = meso-2,6-diaminopimelate. It participates in amino-acid biosynthesis; L-lysine biosynthesis via DAP pathway; DL-2,6-diaminopimelate from LL-2,6-diaminopimelate: step 1/1. In terms of biological role, catalyzes the stereoinversion of LL-2,6-diaminopimelate (L,L-DAP) to meso-diaminopimelate (meso-DAP), a precursor of L-lysine and an essential component of the bacterial peptidoglycan. The chain is Diaminopimelate epimerase from Rhodopseudomonas palustris (strain BisA53).